Consider the following 257-residue polypeptide: MEIKRLPALSDNYIFLLHDANNNTAAVVDPAVAEPVLNCLDQLGAKLIAIFNTHHHADHVGGNKKLMEQFPDLCVYGSKEDQGRIPGQQVFLEEGDTVEFAGKTGKVYFVPGHTRGHIAYYFPPNENEEIGDLFCGDTIFAGGCGRLFEGTPAQMVESIGKLRNLPDHTRIWCAHEYTLNNLKFAVTVDKDNSDLQIRYQDVIKARKNEEATVPSLLGEEKKTNPFLRWDQPALQMITGMNDPARVFGKIRGMKDNF.

Zn(2+) contacts are provided by His54, His56, Asp58, His59, His113, Asp137, and His175.

Belongs to the metallo-beta-lactamase superfamily. Glyoxalase II family. In terms of assembly, monomer. Zn(2+) serves as cofactor.

It catalyses the reaction an S-(2-hydroxyacyl)glutathione + H2O = a 2-hydroxy carboxylate + glutathione + H(+). It functions in the pathway secondary metabolite metabolism; methylglyoxal degradation; (R)-lactate from methylglyoxal: step 2/2. In terms of biological role, thiolesterase that catalyzes the hydrolysis of S-D-lactoyl-glutathione to form glutathione and D-lactic acid. The sequence is that of Hydroxyacylglutathione hydrolase from Crocosphaera subtropica (strain ATCC 51142 / BH68) (Cyanothece sp. (strain ATCC 51142)).